Consider the following 1795-residue polypeptide: Protein TIC 214 (1795 aa).

6 consecutive transmembrane segments (helical) span residues 19–39 (IINSVVVVGLYYGFLTTFSIG), 68–88 (FIAGQLMMFISIYYAPLHLAL), 91–111 (PHTITVLALPYLLFHFFWNNH), 133–153 (VFLNNLIFQLFNHFILPSSML), 176–196 (VGWLIGHILFMKWVGLVLVWI), and 227–247 (IFSILLFITCVYYLGRIPSPI). The disordered stretch occupies residues 1490–1517 (EKESTGQVEFESDKEQQRNSESALSNQE). Polar residues predominate over residues 1508 to 1517 (NSESALSNQE).

The protein belongs to the TIC214 family. Part of the Tic complex.

It is found in the plastid. It localises to the chloroplast inner membrane. Functionally, involved in protein precursor import into chloroplasts. May be part of an intermediate translocation complex acting as a protein-conducting channel at the inner envelope. The polypeptide is Protein TIC 214 (Crucihimalaya wallichii (Rock-cress)).